The chain runs to 197 residues: Holliday junction branch migration complex subunit RuvA (197 aa).

The tract at residues 1 to 64 is domain I; that stretch reads MIGHLEGRLR…EDAIQLYGFR (64 aa). A domain II region spans residues 65–143; the sequence is TVAEKDMFLR…VKKGREAEQP (79 aa). The segment at 144–145 is flexible linker; that stretch reads AP. The domain III stretch occupies residues 146-197; that stretch reads AAESSYGDAYSALVNLGYRPAEAEKALGKAIKSLGADPPVEKLLKETLRLLA.

Belongs to the RuvA family. In terms of assembly, homotetramer. Forms an RuvA(8)-RuvB(12)-Holliday junction (HJ) complex. HJ DNA is sandwiched between 2 RuvA tetramers; dsDNA enters through RuvA and exits via RuvB. An RuvB hexamer assembles on each DNA strand where it exits the tetramer. Each RuvB hexamer is contacted by two RuvA subunits (via domain III) on 2 adjacent RuvB subunits; this complex drives branch migration. In the full resolvosome a probable DNA-RuvA(4)-RuvB(12)-RuvC(2) complex forms which resolves the HJ.

It is found in the cytoplasm. The RuvA-RuvB-RuvC complex processes Holliday junction (HJ) DNA during genetic recombination and DNA repair, while the RuvA-RuvB complex plays an important role in the rescue of blocked DNA replication forks via replication fork reversal (RFR). RuvA specifically binds to HJ cruciform DNA, conferring on it an open structure. The RuvB hexamer acts as an ATP-dependent pump, pulling dsDNA into and through the RuvAB complex. HJ branch migration allows RuvC to scan DNA until it finds its consensus sequence, where it cleaves and resolves the cruciform DNA. In Syntrophobacter fumaroxidans (strain DSM 10017 / MPOB), this protein is Holliday junction branch migration complex subunit RuvA.